The primary structure comprises 1530 residues: Neurexin-1 (1530 aa).

An N-terminal signal peptide occupies residues M1–G30. One can recognise a Laminin G-like 1 domain in the interval L31 to G212. Topologically, residues L31 to T1454 are extracellular. N-linked (GlcNAc...) asparagine glycans are attached at residues N125 and N190. Residues S199–E221 are disordered. In terms of domain architecture, EGF-like 1 spans G213–S256. 2 disulfides stabilise this stretch: C228/C243 and C245/C255. Laminin G-like domains are found at residues I299–C496 and D503–C695. Residues D345, L362, and M430 each contribute to the Ca(2+) site. Intrachain disulfides connect C460–C496, C666–C695, C703–C714, C708–C723, and C725–C735. The region spanning T699–E736 is the EGF-like 2 domain. Residue S705 is glycosylated (O-linked (Glc...) serine). Laminin G-like domains follow at residues V741–C914 and D928–C1103. 2 residues coordinate Ca(2+): D788 and L805. N813 carries N-linked (GlcNAc...) asparagine glycosylation. R864 contacts Ca(2+). 5 disulfides stabilise this stretch: C906–C914, C1075–C1103, C1110–C1121, C1115–C1130, and C1132–C1142. The 38-residue stretch at P1106–N1143 folds into the EGF-like 3 domain. The Laminin G-like 6 domain maps to Y1149–V1347. Positions 1199 and 1216 each coordinate Ca(2+). N1246 carries N-linked (GlcNAc...) asparagine glycosylation. I1298 and N1300 together coordinate Ca(2+). An O-linked (Xyl...) (heparan sulfate) serine glycan is attached at S1408. The tract at residues C1411–S1443 is disordered. A helical membrane pass occupies residues G1455 to M1475. The Cytoplasmic portion of the chain corresponds to Y1476–V1530. Residues N1497–N1523 are interaction with CASK. The disordered stretch occupies residues N1497–V1530.

Belongs to the neurexin family. In terms of assembly, interacts (via laminin G-like domain 2 and/or laminin G-like domain 6) with NLGN1 forming a heterotetramer, where one NLGN1 dimer interacts with one NRXN1 dimer. Also interacts (via laminin G-like domain 2 and/or laminin G-like domain 6) with NLGN2, NLGN3 and NLGN4L; interactions with NLGN1, NLGN2, NLGN3 and NLGN4L are calcium-dependent. Interacts (via cytoplasmic C-terminal region) with CASK (via the PDZ, SH3 and guanylate kinase-like domains). Interacts (via cytoplasmic C-terminus) with CASKIN1 and APBA1. Interacts (via laminin G-like domain 2) with NXPH1 and NXPH3. Alpha-type isoforms (neurexin-1-alpha) interact (via laminin G-like domain 2 and/or laminin G-like domain 6) with DAG1 (via alpha-dystroglycan chain). Interacts with LRRTM1, LRRTM2, LRRTM3 and LRRTM4. Interacts with SYT13 and SYTL1. Interacts with CBLN1, CBLN2 and, less avidly, with CBLN4. Interacts with CLSTN3. Alpha-type isoforms interact with alpha-latrotoxin from spider venom. In terms of processing, O-glycosylated; contains heparan sulfate. Heparan sulfate attachment is required for synapse development by mediating interactions with neuroligins and LRRTM2.

It localises to the presynaptic cell membrane. In terms of biological role, cell surface protein involved in cell-cell-interactions, exocytosis of secretory granules and regulation of signal transmission. Function is isoform-specific. Alpha-type isoforms have a long N-terminus with six laminin G-like domains and play an important role in synaptic signal transmission. Alpha-type isoforms play a role in the regulation of calcium channel activity and Ca(2+)-triggered neurotransmitter release at synapses and at neuromuscular junctions. They play an important role in Ca(2+)-triggered exocytosis of secretory granules in pituitary gland. They may affect their functions at synapses and in endocrine cells via their interactions with proteins from the exocytotic machinery. Likewise, alpha-type isoforms play a role in regulating the activity of postsynaptic NMDA receptors, a subtype of glutamate-gated ion channels. Both alpha-type and beta-type isoforms may play a role in the formation or maintenance of synaptic junctions via their interactions (via the extracellular domains) with neuroligin family members, CBLN1 or CBLN2. In vitro, triggers the de novo formation of presynaptic structures. May be involved in specification of excitatory synapses. Alpha-type isoforms were first identified as receptors for alpha-latrotoxin from spider venom. This chain is Neurexin-1 (NRXN1), found in Bos taurus (Bovine).